The following is a 642-amino-acid chain: Threonine--tRNA ligase (642 aa).

In terms of domain architecture, TGS spans M1 to T65. A catalytic region spans residues D248–P541. Positions 342, 393, and 518 each coordinate Zn(2+).

It belongs to the class-II aminoacyl-tRNA synthetase family. Homodimer. It depends on Zn(2+) as a cofactor.

The protein resides in the cytoplasm. It catalyses the reaction tRNA(Thr) + L-threonine + ATP = L-threonyl-tRNA(Thr) + AMP + diphosphate + H(+). Its function is as follows. Catalyzes the attachment of threonine to tRNA(Thr) in a two-step reaction: L-threonine is first activated by ATP to form Thr-AMP and then transferred to the acceptor end of tRNA(Thr). Also edits incorrectly charged L-seryl-tRNA(Thr). The chain is Threonine--tRNA ligase from Myxococcus xanthus (strain DK1622).